Reading from the N-terminus, the 89-residue chain is Small ribosomal subunit protein bS18 (89 aa).

The protein belongs to the bacterial ribosomal protein bS18 family. Part of the 30S ribosomal subunit. Forms a tight heterodimer with protein bS6.

Its function is as follows. Binds as a heterodimer with protein bS6 to the central domain of the 16S rRNA, where it helps stabilize the platform of the 30S subunit. This Bdellovibrio bacteriovorus (strain ATCC 15356 / DSM 50701 / NCIMB 9529 / HD100) protein is Small ribosomal subunit protein bS18.